A 121-amino-acid chain; its full sequence is uncharacterized protein (121 aa).

This is an uncharacterized protein from Saccharomyces cerevisiae (strain ATCC 204508 / S288c) (Baker's yeast).